The chain runs to 133 residues: Carbohydrate-binding protein AWN (133 aa).

Ala1 carries the post-translational modification N-acetylalanine. Cystine bridges form between Cys9/Cys30 and Cys53/Cys74. In terms of domain architecture, CUB spans 9–110 (CGGVLRDPPG…SPFHIYYYAD (102 aa)). Positions 73–110 (ICGGISLVFRSSSNIATIKYLRTSGQRASPFHIYYYAD) are heparin-binding.

It belongs to the spermadhesin family.

Its subcellular location is the secreted. Functionally, mediates the binding of spermatozoa to component(s) of the egg's zona pellucida by a carbohydrate-binding mechanism. It is a secretory component of the male accessory glands being coated to the sperm surface at the time of ejaculation. This is Carbohydrate-binding protein AWN from Equus caballus (Horse).